Reading from the N-terminus, the 901-residue chain is Protein translocase subunit SecA (901 aa).

Residues Gln-87, 105–109, and Asp-512 each bind ATP; that span reads GEGKT. The tract at residues 859–901 is disordered; sequence HQDDDSAAAAALAAQTGERKVGRNDPCPCGSGKKYKQCHGRLQ. Zn(2+)-binding residues include Cys-885, Cys-887, Cys-896, and His-897. Over residues 891–901 the composition is skewed to basic residues; the sequence is KKYKQCHGRLQ.

This sequence belongs to the SecA family. In terms of assembly, monomer and homodimer. Part of the essential Sec protein translocation apparatus which comprises SecA, SecYEG and auxiliary proteins SecDF-YajC and YidC. Zn(2+) serves as cofactor.

Its subcellular location is the cell inner membrane. It localises to the cytoplasm. It carries out the reaction ATP + H2O + cellular proteinSide 1 = ADP + phosphate + cellular proteinSide 2.. Part of the Sec protein translocase complex. Interacts with the SecYEG preprotein conducting channel. Has a central role in coupling the hydrolysis of ATP to the transfer of proteins into and across the cell membrane, serving both as a receptor for the preprotein-SecB complex and as an ATP-driven molecular motor driving the stepwise translocation of polypeptide chains across the membrane. This chain is Protein translocase subunit SecA, found in Escherichia coli O139:H28 (strain E24377A / ETEC).